Reading from the N-terminus, the 252-residue chain is 5-oxoprolinase subunit A 1 (252 aa).

It belongs to the LamB/PxpA family. Forms a complex composed of PxpA, PxpB and PxpC.

The catalysed reaction is 5-oxo-L-proline + ATP + 2 H2O = L-glutamate + ADP + phosphate + H(+). Its function is as follows. Catalyzes the cleavage of 5-oxoproline to form L-glutamate coupled to the hydrolysis of ATP to ADP and inorganic phosphate. This Pseudomonas aeruginosa (strain ATCC 15692 / DSM 22644 / CIP 104116 / JCM 14847 / LMG 12228 / 1C / PRS 101 / PAO1) protein is 5-oxoprolinase subunit A 1.